Here is a 338-residue protein sequence, read N- to C-terminus: 2-oxoglutarate-dependent dioxygenase ecdG (338 aa).

Residues 165–273 (PSVTNLGFLR…KYTLAYFVRP (109 aa)) enclose the Fe2OG dioxygenase domain. 3 residues coordinate Fe cation: His190, Asp192, and His249. Lys264 is a 2-oxoglutarate binding site.

It belongs to the iron/ascorbate-dependent oxidoreductase family. It depends on Fe(2+) as a cofactor.

It participates in antifungal biosynthesis. Functionally, 2-oxoglutarate-dependent dioxygenase; part of the gene cluster that mediates the biosynthesis of echinocandin B, a fungal lipidated cyclic hexapeptide that acts as an antifungal agent. Linoleoyl-AMP, produced by the fatty-acyl-AMP ligase ecdI, is transferred to the initiation carrier domain (T0) of ecdA. The linoleoyl-S-phosphopantetheinyl-T0 is sequentially extended with L-ornithine, L-threonine, L-proline, L-homotyrosine, L-threonine, and 4R-methyl-L-proline to form the linear hexapeptide. Thereafter, the terminal condensation (C7) performs macrocyclization of the NRPS product and the cyclic scaffold is released from ecdA. All six of the amino acid residues are hydroxylated, including 4R,5R-dihydroxy-L-ornithine, 4R-hydroxyl-L-proline, 3S,4S-dihydroxy-L-homotyrosine, and 3S-hydroxyl-4S-methyl-L-prolin. In the pathway, all the hydroxylation reactions are proposed to occur following completion of the cyclic peptide, so the unhydroxylated precursor produced by ecdA will undergo six rounds of hydroxylation. Five hydroxylase genes (ecdG, ecdH, ecdK, htyE and htyF) are embedded within the echinocandin B (ecd) and L-homotyrosine (hty) clusters. In Aspergillus rugulosus (Emericella rugulosa), this protein is 2-oxoglutarate-dependent dioxygenase ecdG.